The chain runs to 261 residues: uncharacterized protein (261 aa).

The next 6 membrane-spanning stretches (helical) occupy residues 31–51 (TFLS…TGIV), 71–91 (TNVM…SWLL), 101–121 (LAYI…AGIA), 130–150 (LTSS…ASFI), 167–187 (LLLF…IPYV), and 213–233 (FAWL…YLAI).

It is found in the cell membrane. This is an uncharacterized protein from Mycoplasma genitalium (strain ATCC 33530 / DSM 19775 / NCTC 10195 / G37) (Mycoplasmoides genitalium).